Here is a 258-residue protein sequence, read N- to C-terminus: Phosphatidylglycerol--prolipoprotein diacylglyceryl transferase (258 aa).

The next 7 helical transmembrane spans lie at 9 to 29 (ILIQ…ATGF), 53 to 73 (LLTY…TLIY), 90 to 110 (EGGL…WLFV), 117 to 139 (KFLW…IRLG), 169 to 189 (PVQL…LMLF), 198 to 218 (GFLF…IEYF), and 230 to 250 (LISV…VLML). R137 lines the a 1,2-diacyl-sn-glycero-3-phospho-(1'-sn-glycerol) pocket.

It belongs to the Lgt family.

It localises to the cell inner membrane. It carries out the reaction L-cysteinyl-[prolipoprotein] + a 1,2-diacyl-sn-glycero-3-phospho-(1'-sn-glycerol) = an S-1,2-diacyl-sn-glyceryl-L-cysteinyl-[prolipoprotein] + sn-glycerol 1-phosphate + H(+). The protein operates within protein modification; lipoprotein biosynthesis (diacylglyceryl transfer). Functionally, catalyzes the transfer of the diacylglyceryl group from phosphatidylglycerol to the sulfhydryl group of the N-terminal cysteine of a prolipoprotein, the first step in the formation of mature lipoproteins. This chain is Phosphatidylglycerol--prolipoprotein diacylglyceryl transferase, found in Tolumonas auensis (strain DSM 9187 / NBRC 110442 / TA 4).